Consider the following 309-residue polypeptide: L-arabinose 1-dehydrogenase (NAD(P)(+)) (309 aa).

Residues I15 and 37–38 (SR) contribute to the NADP(+) site. K91 (proton donor) is an active-site residue. D169 serves as a coordination point for NADP(+).

The protein belongs to the Gfo/Idh/MocA family. As to quaternary structure, monomer.

The catalysed reaction is alpha-L-arabinopyanose + NAD(+) = L-arabinono-1,4-lactone + NADH + H(+). It catalyses the reaction alpha-L-arabinopyanose + NADP(+) = L-arabinono-1,4-lactone + NADPH + H(+). The enzyme catalyses D-galactose + NAD(+) = D-galactono-1,4-lactone + NADH + H(+). It carries out the reaction D-galactose + NADP(+) = D-galactono-1,5-lactone + NADPH + H(+). It functions in the pathway carbohydrate degradation; L-arabinose degradation via L-arabinono-1,4-lactone pathway. In terms of biological role, catalyzes the NAD(P)(+)-dependent conversion of L-arabinose to L-arabino-gamma-lactone. Is involved in a degradation pathway of L-arabinose that allows A.brasilense to grow on L-arabinose as a sole carbon source. Prefers NADP(+) to NAD(+) as electron acceptor. Displays high catalytic efficiency for both L-arabinose and D-galactose in vitro. However, the enzyme appears to be involved in the metabolism of L-arabinose but not D-galactose in vivo. To a lesser extent, is also active on D-talose and D-xylose as substrates in vitro, but not with D-arabinose, D-glucose, D-ribose, L-xylose, L-mannose, L-lyxose, and D-fructose. The polypeptide is L-arabinose 1-dehydrogenase (NAD(P)(+)) (araA) (Azospirillum brasilense).